A 252-amino-acid polypeptide reads, in one-letter code: Small ribosomal subunit protein uS3 (252 aa).

A KH type-2 domain is found at 38–106 (IRKYIHARLS…EVQINIFEIK (69 aa)). Residues 214-252 (PLAGMDKKQSGTGGGKGGDAPRGKSNFNKGGKPDARKRK) are disordered. The span at 224–233 (GTGGGKGGDA) shows a compositional bias: gly residues.

The protein belongs to the universal ribosomal protein uS3 family. As to quaternary structure, part of the 30S ribosomal subunit. Forms a tight complex with proteins S10 and S14.

Functionally, binds the lower part of the 30S subunit head. Binds mRNA in the 70S ribosome, positioning it for translation. In Flavobacterium johnsoniae (strain ATCC 17061 / DSM 2064 / JCM 8514 / BCRC 14874 / CCUG 350202 / NBRC 14942 / NCIMB 11054 / UW101) (Cytophaga johnsonae), this protein is Small ribosomal subunit protein uS3.